Here is a 164-residue protein sequence, read N- to C-terminus: MPSFDISSEVDMVALKNAVDVAGRQIANRYDFKGTSASIELNEKDGLITLHGDSDFQLDQIKAILLPAMEKKEADSAKRLDHQDVQKISGNKVKQVLKIKAGIDAELAKKIVRLLKDSGLKVQASIQGDEVRVTGAKRDVLQEVIAFVRKSITDFPLQFGNFRD.

This sequence belongs to the YajQ family.

Its function is as follows. Nucleotide-binding protein. This Methylobacillus flagellatus (strain ATCC 51484 / DSM 6875 / VKM B-1610 / KT) protein is Nucleotide-binding protein Mfla_1706.